Here is a 454-residue protein sequence, read N- to C-terminus: Innexin-19 (454 aa).

Over 1-48 the chain is Cytoplasmic; that stretch reads MWRTPASTGPLRQDRQMFFHATLARSFINALSVRGDDDAVDRLNYYYT. A helical membrane pass occupies residues 49–69; the sequence is PLILAVCCLVISAKQYGGTPI. Residues 70 to 118 are Extracellular-facing; the sequence is ECWVNPHSRESMEEYIESYCWIQNTYWIPMYENVPDDHTAREEKQIGYY. Residues 119-139 form a helical membrane-spanning segment; the sequence is QWVPFILIAEALMFSLPCIFW. The Cytoplasmic segment spans residues 140–214; it reads RLCSFQSGLN…SRFLSGQCLS (75 aa). A helical transmembrane segment spans residues 215 to 235; the sequence is ILHSFTKLLYSMNVVAQFLIL. Residues 236–300 lie on the Extracellular side of the membrane; the sequence is NACLKSSDFL…ALLINIINEK (65 aa). A helical transmembrane segment spans residues 301–321; it reads VFAFLWCWYMILAIITTCSFI. The Cytoplasmic segment spans residues 322–454; sequence YWIANSFIHS…SNPGQTKSFL (133 aa).

This sequence belongs to the pannexin family. Specifically expressed in sensory neurons and interneurons in the head and tail. Expressed in neurons AWC, ASH, AFD, ASI, ADL, ASK, BAG, AWB, and ADF (head sensory neurons); ADA, AIZ, RIC, AIY, and AIM (head interneurons); PHA and PHB (tail sensory neurons); and PVC and PVQ (tail interneurons).

It is found in the cell membrane. Its subcellular location is the cell junction. It localises to the gap junction. Structural component of the gap junctions that specifically coordinates left-right asymmetry in the developing nervous system. Acts by forming gap junction network linking embryonic neurons and providing electrical coupling between cells, leading to promote or inhibit AWC signaling. Required for the left and right AWC olfactory neurons to establish asymmetric patterns of gene expression during embryogenesis. Acts autonomously. The sequence is that of Innexin-19 (inx-19) from Caenorhabditis elegans.